The primary structure comprises 111 residues: uncharacterized protein (111 aa).

Residues Leu48–Tyr70 form a helical membrane-spanning segment.

It localises to the membrane. This is an uncharacterized protein from Saccharomyces cerevisiae (strain ATCC 204508 / S288c) (Baker's yeast).